The chain runs to 456 residues: Tyrosine phenol-lyase (456 aa).

Residue K257 is modified to N6-(pyridoxal phosphate)lysine.

Belongs to the beta-eliminating lyase family. Homotetramer. Requires pyridoxal 5'-phosphate as cofactor.

The enzyme catalyses L-tyrosine + H2O = phenol + pyruvate + NH4(+). The polypeptide is Tyrosine phenol-lyase (tpl) (Citrobacter freundii).